A 599-amino-acid chain; its full sequence is Sulfite reductase [NADPH] flavoprotein alpha-component (599 aa).

In terms of domain architecture, Flavodoxin-like spans 64-202 (ITIISASQTG…AASEWRARVV (139 aa)). Residues 70–75 (SQTGNA), 117–120 (STQG), and 153–162 (LGDSSYEFFC) contribute to the FMN site. An FAD-binding FR-type domain is found at 234 to 448 (DAPLVASLSV…IEHNDNFRLP (215 aa)). Residues threonine 322, alanine 356, 386 to 389 (RLYS), 404 to 406 (TVG), tyrosine 410, and 419 to 422 (GGAS) contribute to the FAD site. NADP(+) is bound by residues 519-520 (SR), 525-529 (KVYVQ), and aspartate 561. Position 599 (tyrosine 599) interacts with FAD.

It belongs to the NADPH-dependent sulphite reductase flavoprotein subunit CysJ family. In the N-terminal section; belongs to the flavodoxin family. This sequence in the C-terminal section; belongs to the flavoprotein pyridine nucleotide cytochrome reductase family. Alpha(8)-beta(8). The alpha component is a flavoprotein, the beta component is a hemoprotein. FAD is required as a cofactor. Requires FMN as cofactor.

It carries out the reaction hydrogen sulfide + 3 NADP(+) + 3 H2O = sulfite + 3 NADPH + 4 H(+). The protein operates within sulfur metabolism; hydrogen sulfide biosynthesis; hydrogen sulfide from sulfite (NADPH route): step 1/1. Functionally, component of the sulfite reductase complex that catalyzes the 6-electron reduction of sulfite to sulfide. This is one of several activities required for the biosynthesis of L-cysteine from sulfate. The flavoprotein component catalyzes the electron flow from NADPH -&gt; FAD -&gt; FMN to the hemoprotein component. This Shigella flexneri serotype 5b (strain 8401) protein is Sulfite reductase [NADPH] flavoprotein alpha-component.